Here is a 362-residue protein sequence, read N- to C-terminus: Chalcone synthase A (362 aa).

C168 is a catalytic residue.

The protein belongs to the thiolase-like superfamily. Chalcone/stilbene synthases family.

The catalysed reaction is (E)-4-coumaroyl-CoA + 3 malonyl-CoA + 3 H(+) = 2',4,4',6'-tetrahydroxychalcone + 3 CO2 + 4 CoA. It participates in secondary metabolite biosynthesis; flavonoid biosynthesis. In terms of biological role, the primary product of this enzyme is 4,2',4',6'-tetrahydroxychalcone (also termed naringenin-chalcone or chalcone) which can under specific conditions spontaneously isomerize into naringenin. The protein is Chalcone synthase A (CHSA) of Ipomoea platensis (Morning glory).